A 357-amino-acid chain; its full sequence is MSPSPSVSPRRTLNNKSSYINNSGGLVLPPTQFNLNQQPVLSFQQKATFDSNQQFFYYPESPTKNLRPRFNSISQVNKGVNEDHYTGGGSSNNNRPSRYTNTMGAANTNVNSHPHHQSVSHLNSKSLKFNQTKEVSSINEIIFPSRTCTKKRYFTKPIDLYGTRSSTSVAPKLTNSPTKSKTNFNIKKCILPRSVVTTYKLPSPVHETIDDISKKIIILLISLKFEKNYHFLQPIQLSTNSKTRISKSLDELCGVQLTSTLRQQKQLQGNSKPVKNLPNSNAKQRAGASVSTNANESFELSFDGKAMDRSDIFRMVDSFSIAISDEDEEDEEEDSFQQRSANNRILPAEILSNEPLK.

Position 72 is a phosphoserine (Ser-72). Disordered regions lie at residues 79–98 (GVNE…RPSR), 264–290 (QKQL…GASV), and 323–357 (ISDE…EPLK). Residues 324–335 (SDEDEEDEEEDS) are compositionally biased toward acidic residues.

This is an uncharacterized protein from Saccharomyces cerevisiae (strain ATCC 204508 / S288c) (Baker's yeast).